The sequence spans 116 residues: Large ribosomal subunit protein bL19 (116 aa).

Belongs to the bacterial ribosomal protein bL19 family.

Its function is as follows. This protein is located at the 30S-50S ribosomal subunit interface and may play a role in the structure and function of the aminoacyl-tRNA binding site. This chain is Large ribosomal subunit protein bL19, found in Flavobacterium psychrophilum (strain ATCC 49511 / DSM 21280 / CIP 103535 / JIP02/86).